Consider the following 796-residue polypeptide: Cation/H(+) antiporter 6B (796 aa).

13 helical membrane passes run 54–74 (DFWEYPLPQLEIIILSIFLLW), 93–113 (SMMLVGAVLSEMFGSMQIPCL), 131–151 (IGAFAFVLDWFLRGVTTDVGI), 159–179 (SVVIGITSMIIPWQIGKLLYS), 194–213 (YTVMTFTMSMTPFTCVNMLL), 223–243 (FGQIAQSAGMVTDLLAFFLTV), 259–279 (LAFMAFFIFVYLVRQFMLWVI), 285–305 (GAPVKNVYLYIGLLLAYLSYL), 310–330 (FLFFGPLGAFALGLAVPNGPP), 344–364 (EGIFLPLFGSLSMIKLDWSFL), 382–402 (FSFLPIVYIAKFATSFLAALA), 411–431 (IILGVIMGTKSSFELGYVLTA), and 444–464 (LLGVYILVNSLLTPMAIHFLY).

It belongs to the monovalent cation:proton antiporter 2 (CPA2) transporter (TC 2.A.37) family. CHX (TC 2.A.37.4) subfamily. As to expression, preferentially expressed in pollen.

The protein resides in the membrane. May operate as a cation/H(+) antiporter. The polypeptide is Cation/H(+) antiporter 6B (CHX6b) (Arabidopsis thaliana (Mouse-ear cress)).